The following is a 380-amino-acid chain: Chaperone protein DnaJ (380 aa).

Residues 4-69 (DYYEILGVTR…QKRAAYDRFG (66 aa)) enclose the J domain. The CR-type zinc finger occupies 135-213 (GKTAQINIPS…CQGTRRVEKN (79 aa)). Residues C148, C151, C165, C168, C187, C190, C201, and C204 each coordinate Zn(2+). CXXCXGXG motif repeat units follow at residues 148 to 155 (CDSCEGSG), 165 to 172 (CGTCHGAG), 187 to 194 (CHACNGRG), and 201 to 208 (CPKCQGTR).

The protein belongs to the DnaJ family. In terms of assembly, homodimer. The cofactor is Zn(2+).

It is found in the cytoplasm. Its function is as follows. Participates actively in the response to hyperosmotic and heat shock by preventing the aggregation of stress-denatured proteins and by disaggregating proteins, also in an autonomous, DnaK-independent fashion. Unfolded proteins bind initially to DnaJ; upon interaction with the DnaJ-bound protein, DnaK hydrolyzes its bound ATP, resulting in the formation of a stable complex. GrpE releases ADP from DnaK; ATP binding to DnaK triggers the release of the substrate protein, thus completing the reaction cycle. Several rounds of ATP-dependent interactions between DnaJ, DnaK and GrpE are required for fully efficient folding. Also involved, together with DnaK and GrpE, in the DNA replication of plasmids through activation of initiation proteins. This Bartonella quintana (strain Toulouse) (Rochalimaea quintana) protein is Chaperone protein DnaJ.